Reading from the N-terminus, the 129-residue chain is MKPQLLALKQFVQTEFEKVDFETFRQNFNRCLEREQSTLLIYEDDDYDDQSFFLKPMLSDAFFISSEVVKQLDLLAVLVDNPKGDVKSCCQSFYEALTLFISALAITKGVDVGRYHQQLGKRFGVLTVY.

This is an uncharacterized protein from Mycoplasma pneumoniae (strain ATCC 29342 / M129 / Subtype 1) (Mycoplasmoides pneumoniae).